Consider the following 312-residue polypeptide: Cathepsin O (312 aa).

Positions 1–23 (MKPQLVNLLLLCCCCLGRHGVAG) are cleaved as a signal peptide. A propeptide spans 24-98 (TWSWSHQREA…EGQRPIPNVS (75 aa)) (activation peptide). N-linked (GlcNAc...) asparagine glycosylation is found at N53 and N96. 3 cysteine pairs are disulfide-bonded: C120/C161, C154/C195, and C253/C301. C123 is an active-site residue. Residues H260 and N280 contribute to the active site.

The protein belongs to the peptidase C1 family.

Its subcellular location is the lysosome. The enzyme catalyses The recombinant human enzyme hydrolyzes synthetic endopeptidase substrates including Z-Phe-Arg-NHMec and Z-Arg-Arg-NHMec.. In terms of biological role, proteolytic enzyme possibly involved in normal cellular protein degradation and turnover. The sequence is that of Cathepsin O (Ctso) from Mus musculus (Mouse).